The chain runs to 492 residues: 6-phosphogluconate dehydrogenase, decarboxylating 2 (492 aa).

Residues 12 to 17, 35 to 37, 77 to 79, and Asn-105 each bind NADP(+); these read GLAVMG, NRT, and IKA. Substrate contacts are provided by residues Asn-105 and 131–133; that span reads SGG. Lys-185 acts as the Proton acceptor in catalysis. 188–189 lines the substrate pocket; the sequence is HN. The active-site Proton donor is the Glu-192. 5 residues coordinate substrate: Tyr-193, Lys-262, Arg-289, Arg-449, and His-455.

The protein belongs to the 6-phosphogluconate dehydrogenase family. In terms of assembly, homodimer.

The enzyme catalyses 6-phospho-D-gluconate + NADP(+) = D-ribulose 5-phosphate + CO2 + NADPH. It participates in carbohydrate degradation; pentose phosphate pathway; D-ribulose 5-phosphate from D-glucose 6-phosphate (oxidative stage): step 3/3. In terms of biological role, catalyzes the oxidative decarboxylation of 6-phosphogluconate to ribulose 5-phosphate and CO(2), with concomitant reduction of NADP to NADPH. This chain is 6-phosphogluconate dehydrogenase, decarboxylating 2 (GND2), found in Saccharomyces cerevisiae (strain ATCC 204508 / S288c) (Baker's yeast).